A 218-amino-acid polypeptide reads, in one-letter code: Small ribosomal subunit protein uS3c (218 aa).

The KH type-2 domain occupies 47–118 (VQKHMRISSG…RLNITITRIA (72 aa)).

The protein belongs to the universal ribosomal protein uS3 family. As to quaternary structure, part of the 30S ribosomal subunit.

Its subcellular location is the plastid. It is found in the chloroplast. This Amborella trichopoda protein is Small ribosomal subunit protein uS3c (rps3).